A 300-amino-acid polypeptide reads, in one-letter code: Probable malate dehydrogenase (300 aa).

6-12 provides a ligand contact to NAD(+); sequence IGAGNVG. R81 and R87 together coordinate substrate. NAD(+)-binding positions include N94 and 117–119; that span reads LTN. Substrate contacts are provided by N119 and R150. Residue H174 is the Proton acceptor of the active site.

The protein belongs to the LDH/MDH superfamily.

The enzyme catalyses (S)-malate + NAD(+) = oxaloacetate + NADH + H(+). Catalyzes the reversible oxidation of malate to oxaloacetate. This is Probable malate dehydrogenase (mdh) from Campylobacter jejuni subsp. jejuni serotype O:2 (strain ATCC 700819 / NCTC 11168).